The following is a 419-amino-acid chain: Methylthioribose kinase (419 aa).

2 residues coordinate ATP: Asn-49 and Lys-64. Asp-239 is a binding site for substrate. 256–258 is an ATP binding site; the sequence is DPE. Residue Arg-365 participates in substrate binding.

The protein belongs to the methylthioribose kinase family. As to quaternary structure, homodimer.

The enzyme catalyses 5-(methylsulfanyl)-D-ribose + ATP = 5-(methylsulfanyl)-alpha-D-ribose 1-phosphate + ADP + H(+). It carries out the reaction 5-deoxy-D-ribose + ATP = 5-deoxy-alpha-D-ribose 1-phosphate + ADP + H(+). It participates in amino-acid biosynthesis; L-methionine biosynthesis via salvage pathway; S-methyl-5-thio-alpha-D-ribose 1-phosphate from S-methyl-5'-thioadenosine (hydrolase route): step 2/2. In terms of biological role, catalyzes the phosphorylation of methylthioribose into methylthioribose-1-phosphate. Also catalyzes the phosphorylation of 5-deoxyribose to 5-deoxyribose-1-phosphate. Part of a bifunctional DHAP-shunt salvage pathway for SAM by-products. This is Methylthioribose kinase from Escherichia coli O45:K1 (strain S88 / ExPEC).